Reading from the N-terminus, the 306-residue chain is Aspartate carbamoyltransferase catalytic subunit (306 aa).

Carbamoyl phosphate contacts are provided by Arg-55 and Thr-56. Lys-84 contributes to the L-aspartate binding site. Carbamoyl phosphate-binding residues include Arg-105, His-133, and Gln-136. Residues Arg-166 and Arg-227 each contribute to the L-aspartate site. Carbamoyl phosphate-binding residues include Leu-265 and Pro-266.

This sequence belongs to the aspartate/ornithine carbamoyltransferase superfamily. ATCase family. As to quaternary structure, heterododecamer (2C3:3R2) of six catalytic PyrB chains organized as two trimers (C3), and six regulatory PyrI chains organized as three dimers (R2).

The catalysed reaction is carbamoyl phosphate + L-aspartate = N-carbamoyl-L-aspartate + phosphate + H(+). The protein operates within pyrimidine metabolism; UMP biosynthesis via de novo pathway; (S)-dihydroorotate from bicarbonate: step 2/3. Catalyzes the condensation of carbamoyl phosphate and aspartate to form carbamoyl aspartate and inorganic phosphate, the committed step in the de novo pyrimidine nucleotide biosynthesis pathway. In Aeromonas salmonicida (strain A449), this protein is Aspartate carbamoyltransferase catalytic subunit.